Reading from the N-terminus, the 392-residue chain is Succinyl-diaminopimelate desuccinylase (392 aa).

Zn(2+) is bound at residue H77. Residue D79 is part of the active site. Residue D110 coordinates Zn(2+). The active-site Proton acceptor is E144. The Zn(2+) site is built by E145, E173, and H359.

Belongs to the peptidase M20A family. DapE subfamily. As to quaternary structure, homodimer. The cofactor is Zn(2+). Requires Co(2+) as cofactor.

The catalysed reaction is N-succinyl-(2S,6S)-2,6-diaminopimelate + H2O = (2S,6S)-2,6-diaminopimelate + succinate. It participates in amino-acid biosynthesis; L-lysine biosynthesis via DAP pathway; LL-2,6-diaminopimelate from (S)-tetrahydrodipicolinate (succinylase route): step 3/3. Functionally, catalyzes the hydrolysis of N-succinyl-L,L-diaminopimelic acid (SDAP), forming succinate and LL-2,6-diaminopimelate (DAP), an intermediate involved in the bacterial biosynthesis of lysine and meso-diaminopimelic acid, an essential component of bacterial cell walls. In Thiobacillus denitrificans (strain ATCC 25259 / T1), this protein is Succinyl-diaminopimelate desuccinylase.